The chain runs to 183 residues: Hypoxanthine/guanine phosphoribosyltransferase (183 aa).

This sequence belongs to the purine/pyrimidine phosphoribosyltransferase family. Archaeal HPRT subfamily. In terms of assembly, homodimer.

It is found in the cytoplasm. The catalysed reaction is IMP + diphosphate = hypoxanthine + 5-phospho-alpha-D-ribose 1-diphosphate. It carries out the reaction GMP + diphosphate = guanine + 5-phospho-alpha-D-ribose 1-diphosphate. It functions in the pathway purine metabolism; IMP biosynthesis via salvage pathway; IMP from hypoxanthine: step 1/1. Functionally, catalyzes a salvage reaction resulting in the formation of IMP that is energically less costly than de novo synthesis. This is Hypoxanthine/guanine phosphoribosyltransferase from Methanotorris igneus (strain DSM 5666 / JCM 11834 / Kol 5).